We begin with the raw amino-acid sequence, 206 residues long: Putative cryptic phosphonate transport system permease protein PhnE1 (206 aa).

3 helical membrane-spanning segments follow: residues 30 to 50, 92 to 112, and 137 to 157; these read WFSLLSWAVVLAVLVVSWQGA, IAVWGTALAVVLSIPFGLMSA, and MVFAMLFVVAVGLGPFAGVLA.

In terms of assembly, if the reading frame is restored, the complex is composed of two ATP-binding proteins (PhnC), two transmembrane proteins (PhnE) and a solute-binding protein (PhnD).

It localises to the cell inner membrane. In terms of biological role, N-terminal fragment of the PhnE protein, part of a phosphonate usage operon that is cryptic in K12 strains. Growth of K12 strains on phosphonate can be observed when it is used as the sole phosphorus source after a 60 hour lag period, suggesting the operon is activated. An intact PhnE in strain B is (AC A0A140NFA3). Part of the binding-protein-dependent transport system for phosphonates; probably responsible for the translocation of the substrate across the membrane. In Escherichia coli (strain K12), this protein is Putative cryptic phosphonate transport system permease protein PhnE1 (phnE1).